Here is a 408-residue protein sequence, read N- to C-terminus: MNFNFSRFQYISNIFFILIISFPGGLIYLLTGSTLSFWLRESGFDKITIGLFSLVNFIHIFKFLWGPLLEKVSFAPLSKRGYKYCLIIALVSCICCVYILTNFNPNTHFIPFALCLVAVAFFSSIYDMLLQSSQMLLITNKNWGISEAACTTGFRIGILIAGSGALYLSTIISWQDVYRSMAILCIPSLLLIIIYPLKFKDKTIINDFDRFWYAFYDFIKKPKWLIIVSFMLLYRLQDNFLSIMPNMFYLDIGYTKKDLALGYKAFGMCAAILGGFIGGFLCRKYEYFYLLKRALIYHALSSLSFLFLYFYNRDITSLYIAVFFQEFTKGLTMSPFFSYQLRCCSSKYCITQIALITSIAYISTILFGSISGYAATYLGWTYFFLVAGFCFIPAYILIKYLPPYVIPS.

12 consecutive transmembrane segments (helical) span residues 10–30, 49–69, 84–104, 109–129, 154–174, 177–197, 224–244, 261–281, 294–311, 315–337, 353–373, and 378–398; these read YISNIFFILIISFPGGLIYLL, IGLFSLVNFIHIFKFLWGPLL, YCLIIALVSCICCVYILTNFN, FIPFALCLVAVAFFSSIYDML, FRIGILIAGSGALYLSTIISW, VYRSMAILCIPSLLLIIIYPL, WLIIVSFMLLYRLQDNFLSIM, LGYKAFGMCAAILGGFIGGFL, ALIYHALSSLSFLFLYFY, ITSLYIAVFFQEFTKGLTMSPFF, IALITSIAYISTILFGSISGY, and LGWTYFFLVAGFCFIPAYILI.

This sequence belongs to the major facilitator superfamily.

It localises to the cell inner membrane. The polypeptide is Putative transporter AmpG 2 (ampG2) (Rickettsia felis (strain ATCC VR-1525 / URRWXCal2) (Rickettsia azadi)).